We begin with the raw amino-acid sequence, 347 residues long: 3-isopropylmalate dehydrogenase (347 aa).

Residues arginine 87, arginine 97, arginine 121, and aspartate 212 each contribute to the substrate site. Mg(2+) contacts are provided by aspartate 212, aspartate 236, and aspartate 240. An NAD(+)-binding site is contributed by glycine 272–aspartate 284.

It belongs to the isocitrate and isopropylmalate dehydrogenases family. LeuB type 2 subfamily. In terms of assembly, homodimer. Requires Mg(2+) as cofactor. Mn(2+) serves as cofactor.

The protein localises to the cytoplasm. It carries out the reaction (2R,3S)-3-isopropylmalate + NAD(+) = 4-methyl-2-oxopentanoate + CO2 + NADH. The protein operates within amino-acid biosynthesis; L-leucine biosynthesis; L-leucine from 3-methyl-2-oxobutanoate: step 3/4. Its function is as follows. Catalyzes the oxidation of 3-carboxy-2-hydroxy-4-methylpentanoate (3-isopropylmalate) to 3-carboxy-4-methyl-2-oxopentanoate. The product decarboxylates to 4-methyl-2 oxopentanoate. The chain is 3-isopropylmalate dehydrogenase from Saccharopolyspora erythraea (strain ATCC 11635 / DSM 40517 / JCM 4748 / NBRC 13426 / NCIMB 8594 / NRRL 2338).